Consider the following 514-residue polypeptide: MDLRFQRGPSGEWKASVVLAFAFKGEDIRKQAQALIDVAPWLDIAPALNDFTGAAGETGVLYGHPKIAIPRIILCGLGERESYTAETLRKSVAAAMQKCRELKLETVGIDVQTLAGLPGDAARNVEEAVVSAYLPLYTYERFRTTRKEPLFTPSWISLFFAEDIDSTLRDAARRGESAAAGIFLTRDLVNGPANLVTPSFLEEQARKLAARYGFTVRSMTRQEIAAAGMGAFESVFKGAVEDARLLAIEYCPRGMEKEQPLVFVGKGVTFDTGGISLKPSANMGDMKSDMGGAGAIFGLFETIGQMGGQAGAASAGFTRRVIGVMPCTENMPDGQATRPGDVVTSLSGQTIEIINTDAEGRLILCDAMTWAQREYDPAVMVDLATLTGACLIALGTDVAAVFATDDALADTVRTRGGDVGDLYWRLPLWDRYFEDLKSDVADMKNVGGREGGTINAALFLKQFVDEGRRWAHLDIAGPAYRNKKSPLCPFGATGFAVRTLMQLALHGVPEPSGD.

Mn(2+) contacts are provided by K266 and D271. The active site involves K278. The Mn(2+) site is built by D289, D357, and E359. R361 is an active-site residue.

This sequence belongs to the peptidase M17 family. Mn(2+) is required as a cofactor.

The protein localises to the cytoplasm. The catalysed reaction is Release of an N-terminal amino acid, Xaa-|-Yaa-, in which Xaa is preferably Leu, but may be other amino acids including Pro although not Arg or Lys, and Yaa may be Pro. Amino acid amides and methyl esters are also readily hydrolyzed, but rates on arylamides are exceedingly low.. It catalyses the reaction Release of an N-terminal amino acid, preferentially leucine, but not glutamic or aspartic acids.. Presumably involved in the processing and regular turnover of intracellular proteins. Catalyzes the removal of unsubstituted N-terminal amino acids from various peptides. The chain is Probable cytosol aminopeptidase from Oleidesulfovibrio alaskensis (strain ATCC BAA-1058 / DSM 17464 / G20) (Desulfovibrio alaskensis).